The following is a 469-amino-acid chain: Ufm1-specific protease 2 (469 aa).

Residue Met-1 is modified to N-acetylmethionine. Catalysis depends on residues Cys-302, Asp-426, and His-428.

It belongs to the peptidase C78 family.

The protein resides in the endoplasmic reticulum. It localises to the cytoplasm. Its subcellular location is the nucleus. In terms of biological role, thiol-dependent isopeptidase that specifically cleaves UFM1, a ubiquitin-like modifier protein, from conjugated proteins, such as CD274/PD-L1, CYB5R3, DDRGK1, MRE11, RPL26/uL24, TRIP4 and RPL26/uL24. While it is also able to mediate the processing of UFM1 precursors, a prerequisite for conjugation reactions, UFSP2 mainly acts as a protein deUFMylase that mediates deconjugation of UFM1 from target proteins. Mediates deUFMylation of RPL26/uL24, a critical step to release the UFM1 ribosome E3 ligase (UREL) complex during the recycling of 60S ribosome subunits from the endoplasmic reticulum. Catalyzes deUFMylation of TRIP4, regulating intracellular nuclear receptors transactivation and thereby regulate cell proliferation and differentiation. The protein is Ufm1-specific protease 2 of Pongo abelii (Sumatran orangutan).